The primary structure comprises 253 residues: FGFR1 oncogene partner 2 homolog (253 aa).

Residues 5–104 adopt a coiled-coil conformation; that stretch reads IEKALADAKA…SALELIMSKY (100 aa). A Phosphoserine modification is found at Ser140. Residues 160 to 223 are a coiled coil; that stretch reads LERRHLEANQ…LREILQITRE (64 aa). The segment at 231 to 253 is disordered; it reads DDASESTSLSALVTNSDLSLRKS. The segment covering 235–253 has biased composition (polar residues); the sequence is ESTSLSALVTNSDLSLRKS.

It belongs to the SIKE family.

Its subcellular location is the cytoplasm. Its function is as follows. May be involved in wound healing pathway. The polypeptide is FGFR1 oncogene partner 2 homolog (Fgfr1op2) (Mus musculus (Mouse)).